The following is a 146-amino-acid chain: Large ribosomal subunit protein bL9 (146 aa).

Belongs to the bacterial ribosomal protein bL9 family.

Its function is as follows. Binds to the 23S rRNA. This Nautilia profundicola (strain ATCC BAA-1463 / DSM 18972 / AmH) protein is Large ribosomal subunit protein bL9.